The sequence spans 129 residues: Glycine cleavage system H protein (129 aa).

The region spanning 24-106 (VFTVGISEHA…YGDGWLFKIK (83 aa)) is the Lipoyl-binding domain. An N6-lipoyllysine modification is found at Lys-65.

The protein belongs to the GcvH family. As to quaternary structure, the glycine cleavage system is composed of four proteins: P, T, L and H. It depends on (R)-lipoate as a cofactor.

In terms of biological role, the glycine cleavage system catalyzes the degradation of glycine. The H protein shuttles the methylamine group of glycine from the P protein to the T protein. The chain is Glycine cleavage system H protein from Alteromonas mediterranea (strain DSM 17117 / CIP 110805 / LMG 28347 / Deep ecotype).